The following is a 37-amino-acid chain: Cytochrome b6-f complex subunit 5 (37 aa).

The chain crosses the membrane as a helical span at residues leucine 5–alanine 25.

This sequence belongs to the PetG family. In terms of assembly, the 4 large subunits of the cytochrome b6-f complex are cytochrome b6, subunit IV (17 kDa polypeptide, PetD), cytochrome f and the Rieske protein, while the 4 small subunits are PetG, PetL, PetM and PetN. The complex functions as a dimer.

It localises to the plastid. The protein resides in the chloroplast thylakoid membrane. In terms of biological role, component of the cytochrome b6-f complex, which mediates electron transfer between photosystem II (PSII) and photosystem I (PSI), cyclic electron flow around PSI, and state transitions. PetG is required for either the stability or assembly of the cytochrome b6-f complex. The sequence is that of Cytochrome b6-f complex subunit 5 from Euglena gracilis.